The following is a 576-amino-acid chain: Protein O-linked-mannose beta-1,4-N-acetylglucosaminyltransferase 2 (576 aa).

Residues 1–4 (MNIS) lie on the Cytoplasmic side of the membrane. The chain crosses the membrane as a helical; Signal-anchor for type II membrane protein span at residues 5-25 (AVFNALLVSIMAAVLWKHVKL). The Lumenal portion of the chain corresponds to 26–576 (LEQFYVIEEE…PFAEVLVCNT (551 aa)). 6 N-linked (GlcNAc...) asparagine glycosylation sites follow: Asn98, Asn275, Asn335, Asn451, Asn539, and Asn561. In terms of domain architecture, Fibronectin type-III spans 482 to 576 (RESKCQASAQ…PFAEVLVCNT (95 aa)).

Belongs to the glycosyltransferase 61 family.

It is found in the endoplasmic reticulum membrane. The enzyme catalyses 3-O-(alpha-D-mannosyl)-L-threonyl-[protein] + UDP-N-acetyl-alpha-D-glucosamine = 3-O-(N-acetyl-beta-D-glucosaminyl-(1-&gt;4)-alpha-D-mannosyl)-L-threonyl-[protein] + UDP + H(+). It participates in protein modification; protein glycosylation. Functionally, O-linked mannose beta-1,4-N-acetylglucosaminyltransferase that transfers UDP-N-acetyl-D-glucosamine to the 4-position of the mannose to generate N-acetyl-D-glucosamine-beta-1,4-O-D-mannosylprotein. Involved in the biosynthesis of the phosphorylated O-mannosyl trisaccharide (N-acetylgalactosamine-beta-3-N-acetylglucosamine-beta-4-(phosphate-6-)mannose), a carbohydrate structure present in alpha-dystroglycan (DAG1), which is required for binding laminin G-like domain-containing extracellular proteins with high affinity. This chain is Protein O-linked-mannose beta-1,4-N-acetylglucosaminyltransferase 2 (pomgnt2), found in Xenopus tropicalis (Western clawed frog).